Reading from the N-terminus, the 91-residue chain is PqqA binding protein (91 aa).

Belongs to the PqqD family. As to quaternary structure, monomer. Interacts with PqqE.

Its pathway is cofactor biosynthesis; pyrroloquinoline quinone biosynthesis. Functionally, functions as a PqqA binding protein and presents PqqA to PqqE, in the pyrroloquinoline quinone (PQQ) biosynthetic pathway. This is PqqA binding protein from Pseudomonas entomophila (strain L48).